The chain runs to 387 residues: 26S proteasome regulatory subunit 6B homolog (387 aa).

175–182 (GPPGTGKT) lines the ATP pocket.

This sequence belongs to the AAA ATPase family. In terms of assembly, the 26S proteasome consists of a 20S proteasome core and two 19S regulatory subunits. The 20S proteasome core is composed of 28 subunits that are arranged in four stacked rings, resulting in a barrel-shaped structure. The two end rings are each formed by seven alpha subunits, and the two central rings are each formed by seven beta subunits. The catalytic chamber with the active sites is on the inside of the barrel.

The protein localises to the cytoplasm. It localises to the nucleus. Functionally, acts as a regulatory subunit of the 26S proteasome which degrades poly-ubiquitinated proteins in the cytoplasm and in the nucleus. It is essential for the regulated turnover of proteins and for the removal of misfolded proteins. The proteasome is a multicatalytic proteinase complex that is characterized by its ability to cleave peptides with Arg, Phe, Tyr, Leu, and Glu adjacent to the leaving group at neutral or slightly basic pH. The protein is 26S proteasome regulatory subunit 6B homolog of Encephalitozoon cuniculi (strain GB-M1) (Microsporidian parasite).